The chain runs to 529 residues: MLRRALASRSSEAAIISTRVSLPRGSIPPPPTSSSSSSSSSREGRRPRFFSTTTTSAERPVDDDEWETVVGLELHVQIGAKTKLFSGAERLYGAEANANVAPFDAALPGSLPAVNARAVELAARLGFALGADVQSRSSFDRKHYHYPDLPHGYQITQQRSPIALGGSLDVFVRDGVSGTLRVERLQLEMDTGKSSKAKSSTLVDLNRAGSTLVEIVTAPDLRGAEEASAAAETFQKVVRFLGVGDANMEEGSMRVDVNVSHRTRDGAVAGERCEVKNLNSFRSIARAVAHERTRQIALLKRGQRVRRQTRSFDPATGATAVLRDKEALLDYRFAPEPDLPPVVIEPAALRAIKAAVPELPSTAAARLTNTAGLAPKLAQTIASKPSTVAYFDACAEAADAWSTRNGTVTVDKQDVANWVTGVLVGAVKRAGVTHKGGAGGEPLRGLPESAGAARVGELLARVAASTSMDSGALEATCAAVVASMPEQLAAYRGGRTRAMGSFVGEVMKRTKGRADPRRAAEIIKTLVDQ.

Residues 17 to 61 (STRVSLPRGSIPPPPTSSSSSSSSSREGRRPRFFSTTTTSAERPV) form a disordered region.

The protein belongs to the GatB/GatE family. GatB subfamily. Subunit of the heterotrimeric GatCAB amidotransferase (AdT) complex, composed of A, B and C subunits.

It localises to the mitochondrion. The protein localises to the plastid. Its subcellular location is the chloroplast. The enzyme catalyses L-glutamyl-tRNA(Gln) + L-glutamine + ATP + H2O = L-glutaminyl-tRNA(Gln) + L-glutamate + ADP + phosphate + H(+). Functionally, allows the formation of correctly charged Gln-tRNA(Gln) through the transamidation of misacylated Glu-tRNA(Gln) in chloroplasts and mitochondria. The reaction takes place in the presence of glutamine and ATP through an activated gamma-phospho-Glu-tRNA(Gln). This chain is Glutamyl-tRNA(Gln) amidotransferase subunit B-2, chloroplastic/mitochondrial, found in Micromonas commoda (strain RCC299 / NOUM17 / CCMP2709) (Picoplanktonic green alga).